The following is a 588-amino-acid chain: ATP-dependent lipid A-core flippase (588 aa).

A run of 6 helical transmembrane segments spans residues Phe-23–Gly-43, Phe-56–Thr-76, Asp-141–Met-161, Val-162–Val-182, Leu-257–Ile-277, and Thr-278–Met-298. Residues Leu-28–Arg-310 form the ABC transmembrane type-1 domain. The ABC transporter domain occupies Ile-342–Val-576. Residue Gly-375–Thr-382 coordinates ATP.

It belongs to the ABC transporter superfamily. Lipid exporter (TC 3.A.1.106) family. Homodimer.

It is found in the cell inner membrane. It carries out the reaction ATP + H2O + lipid A-core oligosaccharideSide 1 = ADP + phosphate + lipid A-core oligosaccharideSide 2.. Functionally, involved in lipopolysaccharide (LPS) biosynthesis. Translocates lipid A-core from the inner to the outer leaflet of the inner membrane. Transmembrane domains (TMD) form a pore in the inner membrane and the ATP-binding domain (NBD) is responsible for energy generation. This Legionella pneumophila (strain Paris) protein is ATP-dependent lipid A-core flippase.